A 176-amino-acid chain; its full sequence is Disulfide bond formation protein B (176 aa).

At M1–A14 the chain is on the cytoplasmic side. The helical transmembrane segment at W15 to W31 threads the bilayer. The Periplasmic segment spans residues F32–C49. C41 and C44 are oxidised to a cystine. Residues A50–P65 traverse the membrane as a helical segment. The Cytoplasmic portion of the chain corresponds to K66–Y71. Residues V72 to Y89 traverse the membrane as a helical segment. Topologically, residues E90 to Q144 are periplasmic. A disulfide bridge connects residues C104 and C130. Residues W145–S163 traverse the membrane as a helical segment. At Q164–R176 the chain is on the cytoplasmic side.

Belongs to the DsbB family.

The protein resides in the cell inner membrane. Required for disulfide bond formation in some periplasmic proteins. Acts by oxidizing the DsbA protein. The chain is Disulfide bond formation protein B from Escherichia coli O6:K15:H31 (strain 536 / UPEC).